Here is a 188-residue protein sequence, read N- to C-terminus: dCTP deaminase (188 aa).

DCTP-binding positions include 111–116 (KSTYAR), 135–137 (TLE), Gln-156, Tyr-170, and Gln-180. The active-site Proton donor/acceptor is the Glu-137.

It belongs to the dCTP deaminase family. Homotrimer.

The catalysed reaction is dCTP + H2O + H(+) = dUTP + NH4(+). The protein operates within pyrimidine metabolism; dUMP biosynthesis; dUMP from dCTP (dUTP route): step 1/2. In terms of biological role, catalyzes the deamination of dCTP to dUTP. In Pseudomonas putida (strain ATCC 700007 / DSM 6899 / JCM 31910 / BCRC 17059 / LMG 24140 / F1), this protein is dCTP deaminase.